The sequence spans 188 residues: Molybdopterin synthase catalytic subunit (188 aa).

Residues 1-14 (MTTQPPQDQTSTTP) are compositionally biased toward low complexity. Residues 1 to 23 (MTTQPPQDQTSTTPSLPPHLDPT) are disordered. Substrate is bound by residues 134–135 (HR), K150, and 157–159 (KRE).

This sequence belongs to the MoaE family. MOCS2B subfamily. Heterotetramer; composed of 2 small (MOCS2A) and 2 large (MOCS2B) subunits.

The protein localises to the cytoplasm. It catalyses the reaction 2 [molybdopterin-synthase sulfur-carrier protein]-C-terminal-Gly-aminoethanethioate + cyclic pyranopterin phosphate + H2O = molybdopterin + 2 [molybdopterin-synthase sulfur-carrier protein]-C-terminal Gly-Gly + 2 H(+). The protein operates within cofactor biosynthesis; molybdopterin biosynthesis. Its function is as follows. Catalytic subunit of the molybdopterin synthase complex, a complex that catalyzes the conversion of precursor Z into molybdopterin. Acts by mediating the incorporation of 2 sulfur atoms from thiocarboxylated MOCS2A into precursor Z to generate a dithiolene group. This chain is Molybdopterin synthase catalytic subunit, found in Neosartorya fischeri (strain ATCC 1020 / DSM 3700 / CBS 544.65 / FGSC A1164 / JCM 1740 / NRRL 181 / WB 181) (Aspergillus fischerianus).